We begin with the raw amino-acid sequence, 290 residues long: MKKKALLPLFLGIMIFLAGCDYSTPEKQDGFFFNTFVQPMKHLLQWLGNDVFHNNFGLAIIVLVLFIRLILLPFMLSNYKNSHMMREKMKVAKPEVDGIQEKVKRARTQEEKMAANQELMEVYKKYDMNPMKSMLGCLPILIQMPIIMGLYFVLKDKLVNGLSEHPHFLWFNLTKPDIWITVIAGVLYFIQAVVSSKTMPQEQRQMGYMMMVISPIMIIWISLQASSALGLYWSVSALFLVIQTHFANIYYSKLAKKEVQPFIEKYEREHNPSSKKKGKNTQVVSKKNKK.

An N-terminal signal peptide occupies residues Met1–Gly19. Cys20 carries the N-palmitoyl cysteine lipid modification. Cys20 carries S-diacylglycerol cysteine lipidation. 5 helical membrane-spanning segments follow: residues Phe56 to Leu76, Met134 to Leu154, Pro176 to Ser196, Met211 to Leu231, and Tyr232 to Ser252. The interval Tyr266–Lys290 is disordered. Residues Asn280–Lys290 are compositionally biased toward polar residues.

The protein belongs to the OXA1/ALB3/YidC family. Type 2 subfamily.

It localises to the cell membrane. Its function is as follows. Required for the insertion and/or proper folding and/or complex formation of integral membrane proteins into the membrane. Involved in integration of membrane proteins that insert both dependently and independently of the Sec translocase complex, as well as at least some lipoproteins. In Staphylococcus epidermidis (strain ATCC 35984 / DSM 28319 / BCRC 17069 / CCUG 31568 / BM 3577 / RP62A), this protein is Membrane protein insertase YidC 2.